A 285-amino-acid chain; its full sequence is Eukaryotic translation initiation factor 3 subunit F-2 (285 aa).

The MPN domain occupies 11 to 145; sequence VFLKPLVLFQ…TRLYCAVEMG (135 aa).

Belongs to the eIF-3 subunit F family. In terms of assembly, component of the eukaryotic translation initiation factor 3 (eIF-3) complex. The eIF-3 complex interacts with pix.

It is found in the cytoplasm. Its function is as follows. Component of the eukaryotic translation initiation factor 3 (eIF-3) complex, which is involved in protein synthesis of a specialized repertoire of mRNAs and, together with other initiation factors, stimulates binding of mRNA and methionyl-tRNAi to the 40S ribosome. The eIF-3 complex specifically targets and initiates translation of a subset of mRNAs involved in cell proliferation. This chain is Eukaryotic translation initiation factor 3 subunit F-2, found in Drosophila sechellia (Fruit fly).